Here is a 149-residue protein sequence, read N- to C-terminus: Putative oligosaccharyltransferase complex subunit CG9662 (149 aa).

Residues 1–32 are Cytoplasmic-facing; it reads MIETLYNLPFHILVPPNIKVRRFSIPMPSPMA. The helical transmembrane segment at 33-53 threads the bilayer; it reads VFSVILFSYFLVTGGIIYDVI. The Extracellular segment spans residues 54 to 83; sequence VEPPSLGATVDEHGHSRPVAFMPYRVNGQY. A helical transmembrane segment spans residues 84–104; it reads IMEGLASSFLFTVGGLGFIIM. Residues 105–117 are Cytoplasmic-facing; the sequence is DQTHTPGKTNLNR. A helical membrane pass occupies residues 118 to 138; sequence LLLTAMGFIFILVSFFTTWLF. The Extracellular segment spans residues 139–149; that stretch reads MRMKLPSYLQP.

This sequence belongs to the OSTC family. As to quaternary structure, component of the oligosaccharyltransferase (OST) complex.

The protein resides in the membrane. Functionally, subunit of the oligosaccharyl transferase (OST) complex that catalyzes the initial transfer of a defined glycan (Glc(3)Man(9)GlcNAc(2) in eukaryotes) from the lipid carrier dolichol-pyrophosphate to an asparagine residue within an Asn-X-Ser/Thr consensus motif in nascent polypeptide chains, the first step in protein N-glycosylation. N-glycosylation occurs cotranslationally and the complex associates with the Sec61 complex at the channel-forming translocon complex that mediates protein translocation across the endoplasmic reticulum (ER). All subunits are required for a maximal enzyme activity. The polypeptide is Putative oligosaccharyltransferase complex subunit CG9662 (Drosophila melanogaster (Fruit fly)).